The following is a 675-amino-acid chain: MGRRRRFTQQSTSDDDDDKAAAEPPKTAKPAVPSSSGAKKQPRRHADEEEDEDEEDELELEDEEDDEKDLEEMRRNEEEERREETRTRRRRGRKPKRAVEESDEEPEEKKAESDEEEEEEVREEDSTEAVPVGDPVKVTGKGKKQRKHYASFEYEGNTFELEDPVLLTPEQKNEKPYVAIIKDITEYDGSLSVTGQWFYRPEEADKKGGGNWTASDTRELFYSFHIDDVPAESVMHKCVVHFIPLNKKIPSRKEHPGFIVQKVYDTVAKKLWNLTDKDYEDNKQHEIDLLVKKTMDRIGELPDREPTDTPGDNTDQFPNKRGLRKRPMNPIDVSRDATGKSEHFVKPETPGSDNLKHYAILAKFKVLTTATYRDKWLDKLLDTIPLTSNEGAGAAHADPVSVAKISNNGSSALDTSSVDNENSYAPDVVVSIMASLEKSTYDSLGSDFQKYNQKMRKLEFNIKNSPVLRTRLMNKELDPPVLLTMSPAELKAGLTPAEKTSEPEESRRLQMTDARCERCTEKKVGISDIIHAGHGDRYQLECISCGHTWFSSRDAISSLTVDAPSTGGNVGTAPWATAKFDVLQKQLASPRDQPDNKPGTDALQKSTAPSMPKLEKQKSFTKPKPEEPSAPTLEKQISFTKSKLDEPFVPTTLIKQKSFPKPKSQEPSARSADHE.

Residues 1–143 (MGRRRRFTQQ…DPVKVTGKGK (143 aa)) form a disordered region. Over residues 22-31 (AEPPKTAKPA) the composition is skewed to low complexity. A compositionally biased stretch (acidic residues) spans 48-70 (EEEDEDEEDELELEDEEDDEKDL). Residues 71 to 86 (EEMRRNEEEERREETR) show a composition bias toward basic and acidic residues. Positions 73–80 (MRRNEEEE) match the Nuclear localization signal motif. The segment covering 87-96 (TRRRRGRKPK) has biased composition (basic residues). The segment covering 113-127 (SDEEEEEEVREEDST) has biased composition (acidic residues). A BAH domain is found at 157-275 (NTFELEDPVL…TVAKKLWNLT (119 aa)). 3 disordered regions span residues 300–349 (ELPD…KPET), 493–512 (GLTP…LQMT), and 587–675 (LASP…ADHE). Composition is skewed to basic and acidic residues over residues 333 to 346 (VSRD…HFVK), 499 to 512 (KTSE…LQMT), and 613 to 627 (KLEK…KPEE). The 147-residue stretch at 372 to 518 (YRDKWLDKLL…LQMTDARCER (147 aa)) folds into the TFIIS central domain.

Expressed constitutively.

The protein localises to the nucleus. Functionally, component of a grass-specific mechanism of vernalization, a process by which prolonged cold exposure provides competence to flower in daylengths longer than 12 hours. Negative regulator of flowering required for vernalization establishment by repressing VRN1 before vernalization and in the fall season. This Brachypodium distachyon (Purple false brome) protein is Protein REPRESSOR OF VERNALIZATION 1.